A 384-amino-acid chain; its full sequence is Neuropeptide Y receptor type 2 (384 aa).

Over 1–54 the chain is Extracellular; that stretch reads MKMGPLGAEADENQTVEEMKVDQFGPGHTTLPGELAPDSEPELIDSTKLIEVQV. Asn13 carries N-linked (GlcNAc...) asparagine glycosylation. A helical transmembrane segment spans residues 55-75; that stretch reads VLILAYCSIILLGVIGNSLVI. At 76–89 the chain is on the cytoplasmic side; sequence HVVIKFKSMRTVTN. The chain crosses the membrane as a helical span at residues 90 to 110; that stretch reads FFIANLAVADLLVNTLCLPFT. At 111–127 the chain is on the extracellular side; the sequence is LTYTLMGEWKMGPVLCH. Cys126 and Cys206 are oxidised to a cystine. Residues 128-148 traverse the membrane as a helical segment; the sequence is LVPYAQGLAVQVSTITLTVIA. The Cytoplasmic segment spans residues 149 to 168; that stretch reads LDRHRCIVYHLESKISKQIS. The chain crosses the membrane as a helical span at residues 169–189; that stretch reads FLIIGLAWGVSALLASPLAIF. The Extracellular segment spans residues 190–219; that stretch reads REYSLIEIIPDFEIVACTEKWPGEEKGIYG. Residues 220–240 traverse the membrane as a helical segment; the sequence is TIYSLSSLLILYVLPLGIISF. Topologically, residues 241 to 271 are cytoplasmic; the sequence is SYTRIWSKLKNHVSPGAAHDHYHQRRQKTTK. Residues 272–292 form a helical membrane-spanning segment; that stretch reads MLVCVVVVFAVSWLPLHAFQL. The Extracellular portion of the chain corresponds to 293–307; sequence AVDIDSHVLDLKEYK. Residues 308 to 328 traverse the membrane as a helical segment; it reads LIFTVFHIIAMCSTFANPLLY. Topologically, residues 329-384 are cytoplasmic; it reads GWMNSNYRKAFLSAFRCEQRLDAIHSEVSVTFKAKKHLQVTKNNGPNDSFTETTNV. A lipid anchor (S-palmitoyl cysteine) is attached at Cys345.

Belongs to the G-protein coupled receptor 1 family.

Its subcellular location is the cell membrane. Receptor for neuropeptide Y and peptide YY. This Bos taurus (Bovine) protein is Neuropeptide Y receptor type 2 (NPY2R).